The primary structure comprises 598 residues: UvrABC system protein C (598 aa).

In terms of domain architecture, GIY-YIG spans Asp14–Ile91. A UVR domain is found at Asp196–Met231.

It belongs to the UvrC family. In terms of assembly, interacts with UvrB in an incision complex.

The protein localises to the cytoplasm. In terms of biological role, the UvrABC repair system catalyzes the recognition and processing of DNA lesions. UvrC both incises the 5' and 3' sides of the lesion. The N-terminal half is responsible for the 3' incision and the C-terminal half is responsible for the 5' incision. In Streptococcus pyogenes serotype M3 (strain ATCC BAA-595 / MGAS315), this protein is UvrABC system protein C.